Here is a 400-residue protein sequence, read N- to C-terminus: Nicotinate phosphoribosyltransferase (400 aa).

Residue His220 is modified to Phosphohistidine; by autocatalysis.

The protein belongs to the NAPRTase family. Post-translationally, transiently phosphorylated on a His residue during the reaction cycle. Phosphorylation strongly increases the affinity for substrates and increases the rate of nicotinate D-ribonucleotide production. Dephosphorylation regenerates the low-affinity form of the enzyme, leading to product release.

It catalyses the reaction nicotinate + 5-phospho-alpha-D-ribose 1-diphosphate + ATP + H2O = nicotinate beta-D-ribonucleotide + ADP + phosphate + diphosphate. It participates in cofactor biosynthesis; NAD(+) biosynthesis; nicotinate D-ribonucleotide from nicotinate: step 1/1. Catalyzes the synthesis of beta-nicotinate D-ribonucleotide from nicotinate and 5-phospho-D-ribose 1-phosphate at the expense of ATP. The protein is Nicotinate phosphoribosyltransferase of Salmonella dublin (strain CT_02021853).